The following is a 494-amino-acid chain: MLASGLLLVALLACLTVMVLMSVWQQRKSRGKLPPGPTPLPFIGNYLQLNTEHICDSIMKFSECYGPVFTIHLGPRRVVVLCGHDAVREALVDQAEEFSGRGEQATFDWVFKGYGVAFSNGERAKQLLRFAIATLRDFGVGKRGIEERIQEESGFLIEAIRSTHGANIDPTFFLSRTVSNVISSIVFGDRFDYEDKEFLSLLSMMLGIFQFTSTSTGQLYEMFSSVMKHLPGPQQQAFKLLQGLEDFIAKKVEHNQRTLDPNSPQDFIDSFLIHMQEEEKNPNTEFYLKNLMMSTLNLFIAGTETVSTTLRYGFLLLMKHPEVEAKVHEEIDRVIGKNRQPKFEDRTKMPYMEAVIHEIQRFGDVIPMSLARRVKKDTKFRDFFLPKGTEVFPMLGSVLRDPSFFSNPQDFNPQHFLDDKGQFKKSDAFVPFSIGKRNCFGEGLARMELFLFFTTVMQNFRLKSSQSPKDIDVSPKHVVFATIPRNYTMSFLPR.

Cysteine 439 provides a ligand contact to heme.

Belongs to the cytochrome P450 family. It depends on heme as a cofactor.

The protein resides in the endoplasmic reticulum membrane. Its subcellular location is the microsome membrane. The enzyme catalyses an organic molecule + reduced [NADPH--hemoprotein reductase] + O2 = an alcohol + oxidized [NADPH--hemoprotein reductase] + H2O + H(+). Functionally, cytochromes P450 are a group of heme-thiolate monooxygenases. In liver microsomes, this enzyme is involved in an NADPH-dependent electron transport pathway. It oxidizes a variety of structurally unrelated compounds, including steroids, fatty acids, and xenobiotics. The chain is Cytochrome P450 2A7 (CYP2A7) from Homo sapiens (Human).